A 314-amino-acid polypeptide reads, in one-letter code: Putative thiamine biosynthesis protein HI_0357 (314 aa).

It belongs to the NMT1/THI5 family.

Functionally, probably involved in thiamine biosynthesis. In Haemophilus influenzae (strain ATCC 51907 / DSM 11121 / KW20 / Rd), this protein is Putative thiamine biosynthesis protein HI_0357.